The chain runs to 802 residues: Aldehyde dehydrogenase family 16 member A1 (802 aa).

The protein belongs to the aldehyde dehydrogenase family. In terms of assembly, interacts with SPG21.

This is Aldehyde dehydrogenase family 16 member A1 (Aldh16a1) from Mus musculus (Mouse).